The chain runs to 432 residues: G-protein coupled receptor 22 (432 aa).

At 1-45 (MCFSPVLEINMQSESNVTVRDDIDDIDTNMYQPLSYPLSFQVSLT) the chain is on the extracellular side. N-linked (GlcNAc...) asparagine glycosylation occurs at asparagine 16. The chain crosses the membrane as a helical span at residues 46 to 66 (GFLMLEIVLGLGSNLTVLVLY). At 67-85 (CMKSNLINSVSNIITMNLH) the chain is on the cytoplasmic side. Residues 86 to 106 (VLDVIICVGCIPLTIVILLLS) traverse the membrane as a helical segment. The Extracellular segment spans residues 107–115 (LESNTALIC). The helical transmembrane segment at 116-136 (CFHEACVSFASVSTAINVFAI) threads the bilayer. The Cytoplasmic segment spans residues 137-156 (TLDRYDISVKPANRILTMGR). A helical membrane pass occupies residues 157–177 (AVMLMTSIWIFSFFSFLIPFI). Over 178–208 (EVNFFSLQSGNTWANKTLLCVSTSEYYTELG) the chain is Extracellular. Asparagine 192 carries an N-linked (GlcNAc...) asparagine glycan. Residues 209 to 229 (MYYHLLVQIPIFFFTVIVMLI) traverse the membrane as a helical segment. Topologically, residues 230–314 (TYTKILQALN…ERQKRVFKMS (85 aa)) are cytoplasmic. Residues 315–335 (LLIISTFLLCWTPISVLNTTI) traverse the membrane as a helical segment. The Extracellular segment spans residues 336 to 348 (LCLGPSDLLVKLR). Residues 349–369 (LCFLVMAYGTTIFHPLLYAFT) traverse the membrane as a helical segment. The Cytoplasmic segment spans residues 370–432 (RQKFQKVLKS…KCLVPQVVTD (63 aa)).

Belongs to the G-protein coupled receptor 1 family. Abundant levels detected in the brain and heart and no detectable expression in other peripheral tissues.

Its subcellular location is the cell membrane. Functionally, orphan G-protein coupled receptor. Seems to act through a G(i)/G(o) mediated pathway. May be involved in ciliogenesis. This is G-protein coupled receptor 22 (Gpr22) from Mus musculus (Mouse).